The chain runs to 261 residues: Carbonic anhydrase 1 (261 aa).

The disordered stretch occupies residues 1–40 (MASPDWGYDDKNGPEQWSKLYPIANGNNQSPVDIKTSETK). An N-acetylalanine modification is found at A2. Positions 4–261 (PDWGYDDKNG…LKGRTVRASF (258 aa)) constitute an Alpha-carbonic anhydrase domain. Catalysis depends on H65, which acts as the Proton donor/acceptor. Zn(2+) contacts are provided by H95, H97, and H120. Residues T200 and 200 to 201 (TH) contribute to the substrate site. Residues 241-261 (PMQHNNRPTQPLKGRTVRASF) form a disordered region.

The protein belongs to the alpha-carbonic anhydrase family. The cofactor is Zn(2+).

Its subcellular location is the cytoplasm. The enzyme catalyses hydrogencarbonate + H(+) = CO2 + H2O. It catalyses the reaction urea = cyanamide + H2O. With respect to regulation, inhibited by acetazolamide. Catalyzes the reversible hydration of carbon dioxide. Can hydrate cyanamide to urea. The chain is Carbonic anhydrase 1 (CA1) from Pan troglodytes (Chimpanzee).